The sequence spans 459 residues: Lipase 4 (459 aa).

Residues 1–14 form the signal peptide; sequence MLFLLFLLVAPIYA. The cysteines at positions 110 and 281 are disulfide-linked. The Charge relay system role is filled by serine 194. Asparagine 229 and asparagine 266 each carry an N-linked (GlcNAc...) asparagine glycan. Active-site charge relay system residues include aspartate 343 and histidine 376. Cysteine 359 and cysteine 404 form a disulfide bridge.

The protein belongs to the AB hydrolase superfamily. Lipase family. Class Lip subfamily.

It is found in the secreted. The enzyme catalyses a triacylglycerol + H2O = a diacylglycerol + a fatty acid + H(+). Secreted lipase that is able to hydrolyze both the neutral triacylglycerols and the monopalmitate ester Tween 40, allowing the use of hydrolyzed products as carbon sources. Has broad lipolytic activity, which may be important for colonization and subsequent infection, therefore contributing to the persistence and virulence in human tissue. This is Lipase 4 from Candida albicans (strain SC5314 / ATCC MYA-2876) (Yeast).